The following is a 306-amino-acid chain: Meiotically up-regulated gene 73 protein (306 aa).

The next 7 membrane-spanning stretches (helical) occupy residues 28 to 48, 59 to 79, 103 to 123, 125 to 145, 154 to 174, 190 to 210, and 224 to 244; these read YWAVFAVFLLCAIVFPLVSIF, FFSILSLVSCLAYFTMACNYG, YIQWLINFPLIIVMLHWTVGV, ILEIAYVVCYVLFAIVCLLAA, WAYYGFSFVGYFIALAHSVVL, FLWSIVYLHVIWFLYYACWIL, and IFYSILDLFEFGFFGAAFSWM.

This sequence belongs to the archaeal/bacterial/fungal opsin family.

The protein localises to the membrane. Has a role in meiosis. The polypeptide is Meiotically up-regulated gene 73 protein (mug73) (Schizosaccharomyces pombe (strain 972 / ATCC 24843) (Fission yeast)).